An 862-amino-acid chain; its full sequence is Probable linoleate 9S-lipoxygenase 5 (862 aa).

A PLAT domain is found at 36 to 161 (NDVNASLLDG…KYKSERIFFA (126 aa)). The Lipoxygenase domain occupies 164 to 862 (AYLPGETPEP…GKGIPNSVSI (699 aa)). The Fe cation site is built by histidine 523, histidine 528, histidine 714, asparagine 718, and isoleucine 862.

It belongs to the lipoxygenase family. As to quaternary structure, monomer. The cofactor is Fe cation. In terms of tissue distribution, not detected in leaves, stems, flowers, roots, tubers and stolons during normal growth and development.

It localises to the cytoplasm. It carries out the reaction (9Z,12Z)-octadecadienoate + O2 = (9S)-hydroperoxy-(10E,12Z)-octadecadienoate. The protein operates within lipid metabolism; oxylipin biosynthesis. In terms of biological role, plant lipoxygenases may be involved in a number of diverse aspects of plant physiology including growth and development, pest resistance, and senescence or responses to wounding. May contribute to cell death during the hypersensitive response (HR) by the massive production of free fatty acid hydroperoxides. Catalyzes the hydroperoxidation of lipids containing a cis,cis-1,4-pentadiene structure. The sequence is that of Probable linoleate 9S-lipoxygenase 5 (LOX1.5) from Solanum tuberosum (Potato).